We begin with the raw amino-acid sequence, 914 residues long: Probable dipeptidyl-aminopeptidase B (914 aa).

The segment covering 1-10 (MGKSEADEDA) has biased composition (acidic residues). Residues 1-81 (MGKSEADEDA…DQPFLPSRKG (81 aa)) form a disordered region. Topologically, residues 1 to 89 (MGKSEADEDA…KGSGARARRV (89 aa)) are cytoplasmic. The span at 20–34 (SSSAASQTSSDSGLS) shows a compositional bias: low complexity. Residues 90–110 (FWGLLLLCLAGWVLAFVLFLI) form a helical; Signal-anchor for type II membrane protein membrane-spanning segment. At 111–914 (QGRSGYSATS…FKRALPVFVH (804 aa)) the chain is on the vacuolar side. 2 N-linked (GlcNAc...) asparagine glycosylation sites follow: N347 and N638. S752 acts as the Charge relay system in catalysis. N806 carries N-linked (GlcNAc...) asparagine glycosylation. Catalysis depends on charge relay system residues D829 and H862.

This sequence belongs to the peptidase S9B family.

The protein resides in the vacuole membrane. The catalysed reaction is Release of an N-terminal dipeptide, Xaa-Yaa-|-Zaa-, from a polypeptide, preferentially when Yaa is Pro, provided Zaa is neither Pro nor hydroxyproline.. Type IV dipeptidyl-peptidase which removes N-terminal dipeptides sequentially from polypeptides having unsubstituted N-termini provided that the penultimate residue is proline. The protein is Probable dipeptidyl-aminopeptidase B (dapB) of Aspergillus terreus (strain NIH 2624 / FGSC A1156).